Here is a 312-residue protein sequence, read N- to C-terminus: tRNA dimethylallyltransferase (312 aa).

12–19 (GPTAIGKS) serves as a coordination point for ATP. 14–19 (TAIGKS) is a binding site for substrate. Interaction with substrate tRNA regions lie at residues 38–41 (DSKL) and 162–166 (QRVLR).

The protein belongs to the IPP transferase family. As to quaternary structure, monomer. Mg(2+) serves as cofactor.

The enzyme catalyses adenosine(37) in tRNA + dimethylallyl diphosphate = N(6)-dimethylallyladenosine(37) in tRNA + diphosphate. Catalyzes the transfer of a dimethylallyl group onto the adenine at position 37 in tRNAs that read codons beginning with uridine, leading to the formation of N6-(dimethylallyl)adenosine (i(6)A). In Buchnera aphidicola subsp. Cinara cedri (strain Cc), this protein is tRNA dimethylallyltransferase.